The primary structure comprises 287 residues: Ribonuclease Z (287 aa).

7 residues coordinate Zn(2+): H64, H66, D68, H69, H124, D191, and H250. D68 functions as the Proton acceptor in the catalytic mechanism.

Belongs to the RNase Z family. In terms of assembly, homodimer. Requires Zn(2+) as cofactor.

The enzyme catalyses Endonucleolytic cleavage of RNA, removing extra 3' nucleotides from tRNA precursor, generating 3' termini of tRNAs. A 3'-hydroxy group is left at the tRNA terminus and a 5'-phosphoryl group is left at the trailer molecule.. In terms of biological role, zinc phosphodiesterase, which displays some tRNA 3'-processing endonuclease activity. Probably involved in tRNA maturation, by removing a 3'-trailer from precursor tRNA. The chain is Ribonuclease Z from Pyrobaculum arsenaticum (strain DSM 13514 / JCM 11321 / PZ6).